A 305-amino-acid polypeptide reads, in one-letter code: Taste receptor type 2 member 13 (305 aa).

The Extracellular segment spans residues Met1–Asp7. Residues Ile8–Val28 traverse the membrane as a helical segment. The Cytoplasmic portion of the chain corresponds to Leu29–Ser42. Residues Phe43–Leu63 traverse the membrane as a helical segment. Residues Leu64–Thr88 lie on the Extracellular side of the membrane. A helical membrane pass occupies residues Trp89–Leu109. The Cytoplasmic portion of the chain corresponds to Lys110–Lys128. A helical membrane pass occupies residues Val129–Asn149. The Extracellular portion of the chain corresponds to Thr150–Glu182. N-linked (GlcNAc...) asparagine glycosylation occurs at Asn162. Residues Met183 to Phe203 form a helical membrane-spanning segment. At Ser204–Arg232 the chain is on the cytoplasmic side. A helical membrane pass occupies residues Ile233–Ile253. The Extracellular segment spans residues Pro254 to Asp262. A helical membrane pass occupies residues Leu263–Leu283. At Gly284–Asp305 the chain is on the cytoplasmic side.

It belongs to the G-protein coupled receptor T2R family. As to expression, expressed in subsets of taste receptor cells of the tongue and palate epithelium and exclusively in gustducin-positive cells. Expressed in 15% taste bud cells in circumvallate and foliate papillae but only in 2% in fungiform papillae. Expressed in the duodenum, antrum and fundus (part of the stomach).

The protein localises to the membrane. Its function is as follows. Receptor that may play a role in the perception of bitterness and is gustducin-linked. May play a role in sensing the chemical composition of the gastrointestinal content. The activity of this receptor may stimulate alpha gustducin, mediate PLC-beta-2 activation and lead to the gating of TRPM5. The protein is Taste receptor type 2 member 13 (Tas2r13) of Rattus norvegicus (Rat).